A 209-amino-acid polypeptide reads, in one-letter code: Uracil phosphoribosyltransferase (209 aa).

5-phospho-alpha-D-ribose 1-diphosphate-binding positions include Arg-79, Arg-104, and 131–139; that span reads DPMLATGGS. Residues Ile-194 and 199–201 contribute to the uracil site; that span reads GDA. Asp-200 provides a ligand contact to 5-phospho-alpha-D-ribose 1-diphosphate.

Belongs to the UPRTase family. Mg(2+) serves as cofactor.

It catalyses the reaction UMP + diphosphate = 5-phospho-alpha-D-ribose 1-diphosphate + uracil. It participates in pyrimidine metabolism; UMP biosynthesis via salvage pathway; UMP from uracil: step 1/1. With respect to regulation, allosterically activated by GTP. Its function is as follows. Catalyzes the conversion of uracil and 5-phospho-alpha-D-ribose 1-diphosphate (PRPP) to UMP and diphosphate. The protein is Uracil phosphoribosyltransferase of Lactobacillus delbrueckii subsp. bulgaricus (strain ATCC 11842 / DSM 20081 / BCRC 10696 / JCM 1002 / NBRC 13953 / NCIMB 11778 / NCTC 12712 / WDCM 00102 / Lb 14).